We begin with the raw amino-acid sequence, 122 residues long: Large ribosomal subunit protein uL14 (122 aa).

The protein belongs to the universal ribosomal protein uL14 family. Part of the 50S ribosomal subunit. Forms a cluster with proteins L3 and L19. In the 70S ribosome, L14 and L19 interact and together make contacts with the 16S rRNA in bridges B5 and B8.

In terms of biological role, binds to 23S rRNA. Forms part of two intersubunit bridges in the 70S ribosome. The protein is Large ribosomal subunit protein uL14 of Chlamydia abortus (strain DSM 27085 / S26/3) (Chlamydophila abortus).